Reading from the N-terminus, the 103-residue chain is Heme-copper oxidase subunit 4 (103 aa).

3 consecutive transmembrane segments (helical) span residues 20 to 40 (VWIVLVASAVAEVYLVLEGIA), 42 to 62 (NPFVFVLAVALFQSSLIALFF), and 75 to 95 (ITVSGAVLIAILIISAVTSVL).

It localises to the cell membrane. This Aeropyrum pernix (strain ATCC 700893 / DSM 11879 / JCM 9820 / NBRC 100138 / K1) protein is Heme-copper oxidase subunit 4 (aoxC).